The chain runs to 549 residues: Probable protein kinase UbiB (549 aa).

A Protein kinase domain is found at 123 to 501 (DFDNTPLASA…QQKAHKSNYL (379 aa)). ATP-binding positions include 129 to 137 (LASASISQV) and Lys152. The Proton acceptor role is filled by Asp287. 2 consecutive transmembrane segments (helical) span residues 498–518 (SNYL…LFNQ) and 520–540 (ATLW…LLGW).

The protein belongs to the ABC1 family. UbiB subfamily.

The protein localises to the cell inner membrane. The protein operates within cofactor biosynthesis; ubiquinone biosynthesis [regulation]. In terms of biological role, is probably a protein kinase regulator of UbiI activity which is involved in aerobic coenzyme Q (ubiquinone) biosynthesis. This chain is Probable protein kinase UbiB, found in Shewanella woodyi (strain ATCC 51908 / MS32).